Here is a 208-residue protein sequence, read N- to C-terminus: ATP-dependent Clp protease proteolytic subunit (208 aa).

Ser107 serves as the catalytic Nucleophile. His132 is a catalytic residue.

The protein belongs to the peptidase S14 family. In terms of assembly, fourteen ClpP subunits assemble into 2 heptameric rings which stack back to back to give a disk-like structure with a central cavity, resembling the structure of eukaryotic proteasomes.

The protein resides in the cytoplasm. The catalysed reaction is Hydrolysis of proteins to small peptides in the presence of ATP and magnesium. alpha-casein is the usual test substrate. In the absence of ATP, only oligopeptides shorter than five residues are hydrolyzed (such as succinyl-Leu-Tyr-|-NHMec, and Leu-Tyr-Leu-|-Tyr-Trp, in which cleavage of the -Tyr-|-Leu- and -Tyr-|-Trp bonds also occurs).. Functionally, cleaves peptides in various proteins in a process that requires ATP hydrolysis. Has a chymotrypsin-like activity. Plays a major role in the degradation of misfolded proteins. The polypeptide is ATP-dependent Clp protease proteolytic subunit (Methylobacterium radiotolerans (strain ATCC 27329 / DSM 1819 / JCM 2831 / NBRC 15690 / NCIMB 10815 / 0-1)).